A 356-amino-acid chain; its full sequence is Branched-chain-amino-acid transaminase 1 (356 aa).

Position 197 is an N6-(pyridoxal phosphate)lysine (Lys197).

The protein belongs to the class-IV pyridoxal-phosphate-dependent aminotransferase family. Requires pyridoxal 5'-phosphate as cofactor.

The enzyme catalyses L-leucine + 2-oxoglutarate = 4-methyl-2-oxopentanoate + L-glutamate. It carries out the reaction L-isoleucine + 2-oxoglutarate = (S)-3-methyl-2-oxopentanoate + L-glutamate. The catalysed reaction is L-valine + 2-oxoglutarate = 3-methyl-2-oxobutanoate + L-glutamate. It functions in the pathway amino-acid biosynthesis; L-isoleucine biosynthesis; L-isoleucine from 2-oxobutanoate: step 4/4. The protein operates within amino-acid biosynthesis; L-leucine biosynthesis; L-leucine from 3-methyl-2-oxobutanoate: step 4/4. Its pathway is amino-acid biosynthesis; L-valine biosynthesis; L-valine from pyruvate: step 4/4. Its activity is regulated as follows. Inhibited by canaline. Transaminates branched-chain amino acids and ketoglutarate. Involved in the final step of the methionine regeneration pathway, where ketomethiobutyrate (KMTB) is converted to methionine via a transamination. The amino donor preference is isoleucine, leucine, valine, phenylalanine, and tyrosine. The protein is Branched-chain-amino-acid transaminase 1 (ilvE) of Bacillus subtilis (strain 168).